The following is a 473-amino-acid chain: GDP-fucose protein O-fucosyltransferase 2 (473 aa).

The N-terminal stretch at 1–25 (MKNMIYNLISISLYSLIIILTDIYA) is a signal peptide. GDP-beta-L-fucose-binding positions include 59–63 (GEGFN), 283–285 (HLR), and 379–380 (RF). The active-site Proton acceptor is the E60.

The protein belongs to the glycosyltransferase 68 family.

The protein resides in the endoplasmic reticulum. The enzyme catalyses L-seryl-[protein] + GDP-beta-L-fucose = 3-O-(alpha-L-fucosyl)-L-seryl-[protein] + GDP + H(+). It carries out the reaction L-threonyl-[protein] + GDP-beta-L-fucose = 3-O-(alpha-L-fucosyl)-L-threonyl-[protein] + GDP + H(+). The protein operates within protein modification; protein glycosylation. Catalyzes the reaction that attaches fucose through an O-glycosidic linkage to a conserved serine or threonine residue in the consensus sequence C1-X-X-S/T-C2 of thrombospondin type I repeats (TSRs) where C1 and C2 are the first and second cysteines of the repeat, respectively. O-fucosylates sporozoite proteins CSP and TRAP. O-fucosylation regulates stability and intracellular trafficking of TRAP but not of CSP. Dispensable for parasite transmission to the mosquito vector and/or infection of the vertebrate host hepatocytes. The sequence is that of GDP-fucose protein O-fucosyltransferase 2 from Plasmodium berghei (strain Anka).